A 320-amino-acid polypeptide reads, in one-letter code: Small ribosomal subunit protein uS2 (320 aa).

The segment covering 1–22 (MADETTTDTPDVQDEDAPDEDA) has biased composition (acidic residues). Residues 1–83 (MADETTTDTP…SSSEEETSHR (83 aa)) form a disordered region. Positions 27-41 (DDTASDSTGEAAAAD) are enriched in low complexity. Composition is skewed to acidic residues over residues 42 to 57 (TDAD…EDAP) and 65 to 78 (DDGD…SSEE).

This sequence belongs to the universal ribosomal protein uS2 family.

In Salinibacter ruber (strain DSM 13855 / M31), this protein is Small ribosomal subunit protein uS2.